The chain runs to 357 residues: sn-glycerol-3-phosphate import ATP-binding protein UgpC (357 aa).

The ABC transporter domain occupies L4–I235. Residue G37 to S44 participates in ATP binding.

It belongs to the ABC transporter superfamily. sn-glycerol-3-phosphate importer (TC 3.A.1.1.3) family. The complex is composed of two ATP-binding proteins (UgpC), two transmembrane proteins (UgpA and UgpE) and a solute-binding protein (UgpB).

Its subcellular location is the cell inner membrane. It catalyses the reaction sn-glycerol 3-phosphate(out) + ATP + H2O = sn-glycerol 3-phosphate(in) + ADP + phosphate + H(+). Its function is as follows. Part of the ABC transporter complex UgpBAEC involved in sn-glycerol-3-phosphate (G3P) import. Responsible for energy coupling to the transport system. The sequence is that of sn-glycerol-3-phosphate import ATP-binding protein UgpC from Pectobacterium atrosepticum (strain SCRI 1043 / ATCC BAA-672) (Erwinia carotovora subsp. atroseptica).